The sequence spans 428 residues: Adenylosuccinate synthetase (428 aa).

Residues 12–18 and 40–42 each bind GTP; these read GDEGKGK and GHS. D13 serves as the catalytic Proton acceptor. D13 and G40 together coordinate Mg(2+). Residues 13–16, 38–41, T128, R142, Q223, T238, and R302 contribute to the IMP site; these read DEGK and NAGH. Residue H41 is the Proton donor of the active site. 298–304 is a binding site for substrate; it reads VTTGRPR. Residues R304, 330-332, and 412-414 contribute to the GTP site; these read KLD and GTG.

Belongs to the adenylosuccinate synthetase family. Homodimer. Mg(2+) is required as a cofactor.

It localises to the cytoplasm. It carries out the reaction IMP + L-aspartate + GTP = N(6)-(1,2-dicarboxyethyl)-AMP + GDP + phosphate + 2 H(+). The protein operates within purine metabolism; AMP biosynthesis via de novo pathway; AMP from IMP: step 1/2. Its function is as follows. Plays an important role in the de novo pathway of purine nucleotide biosynthesis. Catalyzes the first committed step in the biosynthesis of AMP from IMP. This is Adenylosuccinate synthetase from Bifidobacterium longum (strain DJO10A).